The following is a 121-amino-acid chain: Putative ferredoxin (121 aa).

It to E.coli YkgJ.

In Acinetobacter calcoaceticus, this protein is Putative ferredoxin.